A 246-amino-acid polypeptide reads, in one-letter code: Pyridoxine 5'-phosphate synthase (246 aa).

Residue Asn12 participates in 3-amino-2-oxopropyl phosphate binding. 14 to 15 lines the 1-deoxy-D-xylulose 5-phosphate pocket; sequence DH. Arg23 provides a ligand contact to 3-amino-2-oxopropyl phosphate. The active-site Proton acceptor is His48. The 1-deoxy-D-xylulose 5-phosphate site is built by Arg50 and His55. Catalysis depends on Glu75, which acts as the Proton acceptor. Residue Thr105 participates in 1-deoxy-D-xylulose 5-phosphate binding. His196 serves as the catalytic Proton donor. Residues Gly197 and 218 to 219 each bind 3-amino-2-oxopropyl phosphate; that span reads GH.

It belongs to the PNP synthase family. In terms of assembly, homooctamer; tetramer of dimers.

The protein localises to the cytoplasm. The catalysed reaction is 3-amino-2-oxopropyl phosphate + 1-deoxy-D-xylulose 5-phosphate = pyridoxine 5'-phosphate + phosphate + 2 H2O + H(+). Its pathway is cofactor biosynthesis; pyridoxine 5'-phosphate biosynthesis; pyridoxine 5'-phosphate from D-erythrose 4-phosphate: step 5/5. In terms of biological role, catalyzes the complicated ring closure reaction between the two acyclic compounds 1-deoxy-D-xylulose-5-phosphate (DXP) and 3-amino-2-oxopropyl phosphate (1-amino-acetone-3-phosphate or AAP) to form pyridoxine 5'-phosphate (PNP) and inorganic phosphate. The sequence is that of Pyridoxine 5'-phosphate synthase from Nitrosococcus oceani (strain ATCC 19707 / BCRC 17464 / JCM 30415 / NCIMB 11848 / C-107).